The primary structure comprises 388 residues: Dual-specificity RNA methyltransferase RlmN (388 aa).

Catalysis depends on Glu109, which acts as the Proton acceptor. One can recognise a Radical SAM core domain in the interval 115–354 (EDDRATLCVS…TIVRKTRGDD (240 aa)). An intrachain disulfide couples Cys122 to Cys359. [4Fe-4S] cluster contacts are provided by Cys129, Cys133, and Cys136. Residues 183–184 (GE), Ser215, 237–239 (SLH), and Asn316 contribute to the S-adenosyl-L-methionine site. Catalysis depends on Cys359, which acts as the S-methylcysteine intermediate.

This sequence belongs to the radical SAM superfamily. RlmN family. [4Fe-4S] cluster is required as a cofactor.

The protein localises to the cytoplasm. The enzyme catalyses adenosine(2503) in 23S rRNA + 2 reduced [2Fe-2S]-[ferredoxin] + 2 S-adenosyl-L-methionine = 2-methyladenosine(2503) in 23S rRNA + 5'-deoxyadenosine + L-methionine + 2 oxidized [2Fe-2S]-[ferredoxin] + S-adenosyl-L-homocysteine. The catalysed reaction is adenosine(37) in tRNA + 2 reduced [2Fe-2S]-[ferredoxin] + 2 S-adenosyl-L-methionine = 2-methyladenosine(37) in tRNA + 5'-deoxyadenosine + L-methionine + 2 oxidized [2Fe-2S]-[ferredoxin] + S-adenosyl-L-homocysteine. Specifically methylates position 2 of adenine 2503 in 23S rRNA and position 2 of adenine 37 in tRNAs. m2A2503 modification seems to play a crucial role in the proofreading step occurring at the peptidyl transferase center and thus would serve to optimize ribosomal fidelity. In Salmonella typhi, this protein is Dual-specificity RNA methyltransferase RlmN.